The chain runs to 260 residues: Acyl-[acyl-carrier-protein]--UDP-N-acetylglucosamine O-acyltransferase (260 aa).

The protein belongs to the transferase hexapeptide repeat family. LpxA subfamily. As to quaternary structure, homotrimer.

The protein localises to the cytoplasm. The catalysed reaction is a (3R)-hydroxyacyl-[ACP] + UDP-N-acetyl-alpha-D-glucosamine = a UDP-3-O-[(3R)-3-hydroxyacyl]-N-acetyl-alpha-D-glucosamine + holo-[ACP]. Its pathway is glycolipid biosynthesis; lipid IV(A) biosynthesis; lipid IV(A) from (3R)-3-hydroxytetradecanoyl-[acyl-carrier-protein] and UDP-N-acetyl-alpha-D-glucosamine: step 1/6. Its function is as follows. Involved in the biosynthesis of lipid A, a phosphorylated glycolipid that anchors the lipopolysaccharide to the outer membrane of the cell. In Sulfurovum sp. (strain NBC37-1), this protein is Acyl-[acyl-carrier-protein]--UDP-N-acetylglucosamine O-acyltransferase.